The primary structure comprises 244 residues: Cysteine-rich secretory protein 1 (244 aa).

The first 19 residues, 1–19, serve as a signal peptide directing secretion; sequence MALMLVLFFLAAVLPPSLL. The SCP domain maps to 44-170; that stretch reads SKHNQLRRMV…PLRYYYVCHY (127 aa). N-linked (GlcNAc...) asparagine glycosylation is present at N145. Intrachain disulfides connect C190–C197, C193–C202, C206–C239, C215–C233, and C224–C237. In terms of domain architecture, ShKT spans 206–239; sequence CGHEDKYTNCKYLKKMLSCEHELLKKGCKATCLC.

This sequence belongs to the CRISP family. Mainly found in the cauda epididymis where it is synthesized by the principal cells and secreted into the lumen. Binds to the heads of spermatozoa. Also expressed in the submandibular gland.

The protein localises to the cytoplasmic vesicle. The protein resides in the secretory vesicle. In terms of biological role, this protein is supposed to help spermatozoa undergo functional maturation while they move from the testis to the ductus deferens. This chain is Cysteine-rich secretory protein 1 (Crisp1), found in Mus musculus (Mouse).